A 68-amino-acid polypeptide reads, in one-letter code: ATP synthase subunit c (68 aa).

The next 2 membrane-spanning stretches (helical) occupy residues 5-25 (AAAIAIGLAALGAGLGNGMIV) and 47-67 (FIGVALVEAIPIIAAVIAFMV).

The protein belongs to the ATPase C chain family. As to quaternary structure, F-type ATPases have 2 components, F(1) - the catalytic core - and F(0) - the membrane proton channel. F(1) has five subunits: alpha(3), beta(3), gamma(1), delta(1), epsilon(1). F(0) has three main subunits: a(1), b(2) and c(10-14). The alpha and beta chains form an alternating ring which encloses part of the gamma chain. F(1) is attached to F(0) by a central stalk formed by the gamma and epsilon chains, while a peripheral stalk is formed by the delta and b chains.

The protein resides in the cell membrane. F(1)F(0) ATP synthase produces ATP from ADP in the presence of a proton or sodium gradient. F-type ATPases consist of two structural domains, F(1) containing the extramembraneous catalytic core and F(0) containing the membrane proton channel, linked together by a central stalk and a peripheral stalk. During catalysis, ATP synthesis in the catalytic domain of F(1) is coupled via a rotary mechanism of the central stalk subunits to proton translocation. Its function is as follows. Key component of the F(0) channel; it plays a direct role in translocation across the membrane. A homomeric c-ring of between 10-14 subunits forms the central stalk rotor element with the F(1) delta and epsilon subunits. The chain is ATP synthase subunit c from Oceanobacillus iheyensis (strain DSM 14371 / CIP 107618 / JCM 11309 / KCTC 3954 / HTE831).